Consider the following 362-residue polypeptide: Very-long-chain (3R)-3-hydroxyacyl-CoA dehydratase (362 aa).

At 1–149 the chain is on the cytoplasmic side; it reads MADCSLRPHV…DPFKHLKKGY (149 aa). One can recognise a CS domain in the interval 5 to 94; it reads SLRPHVHWAQ…KESSWWERLT (90 aa). Positions 111–135 form a coiled coil; that stretch reads LDESDAEMELKEKEEEKINKMKIES. The chain crosses the membrane as a helical span at residues 150 to 170; it reads LIMYNLVQFLGFSWIFVNMTV. Over 171–189 the chain is Lumenal; sequence RLFILGKDSFYDTFHTIAD. Residues 190–210 form a helical membrane-spanning segment; the sequence is MMYFCQTLALMEILNSLIGLV. Residues 211-212 lie on the Cytoplasmic side of the membrane; the sequence is RS. Residues 213-233 form a helical membrane-spanning segment; the sequence is PLIPAVIQVFGRNFILFVVLG. The Lumenal segment spans residues 234–242; that stretch reads SLEEMQSKA. The helical transmembrane segment at 243–263 threads the bilayer; that stretch reads VVFFLFYFWSIIELFRYPYYM. At 264-282 the chain is on the cytoplasmic side; sequence LSCMGIEWKPLTWLRYTSW. Residues 283 to 303 traverse the membrane as a helical segment; the sequence is IPLYPLGGLAEAVCLIQSIPI. Active-site residues include Tyr-286 and Glu-293. Residues 304–319 are Lumenal-facing; sequence FSETGKFSLGLPNPLN. Residues 320–340 traverse the membrane as a helical segment; it reads VTIQFSFLLQMYLIALFLGLF. Topologically, residues 341-362 are cytoplasmic; sequence VNFRYLYKQRKQHLGPKKRKMK.

The protein belongs to the very long-chain fatty acids dehydratase HACD family.

The protein localises to the endoplasmic reticulum membrane. The catalysed reaction is a very-long-chain (3R)-3-hydroxyacyl-CoA = a very-long-chain (2E)-enoyl-CoA + H2O. The enzyme catalyses (3R)-hydroxyhexadecanoyl-CoA = (2E)-hexadecenoyl-CoA + H2O. It participates in lipid metabolism; fatty acid biosynthesis. Functionally, catalyzes the third of the four reactions of the long-chain fatty acids elongation cycle. This endoplasmic reticulum-bound enzymatic process, allows the addition of two carbons to the chain of long- and very long-chain fatty acids/VLCFAs per cycle. This enzyme catalyzes the dehydration of the 3-hydroxyacyl-CoA intermediate into trans-2,3-enoyl-CoA, within each cycle of fatty acid elongation. Thereby, it participates in the production of VLCFAs of different chain lengths that are involved in multiple biological processes as precursors of membrane lipids and lipid mediators. Involved in Rac1-signaling pathways leading to the modulation of gene expression. This is Very-long-chain (3R)-3-hydroxyacyl-CoA dehydratase from Gallus gallus (Chicken).